A 300-amino-acid chain; its full sequence is UDP-3-O-acyl-N-acetylglucosamine deacetylase (300 aa).

Zn(2+) contacts are provided by His78, His237, and Asp241. His264 functions as the Proton donor in the catalytic mechanism.

It belongs to the LpxC family. Requires Zn(2+) as cofactor.

It carries out the reaction a UDP-3-O-[(3R)-3-hydroxyacyl]-N-acetyl-alpha-D-glucosamine + H2O = a UDP-3-O-[(3R)-3-hydroxyacyl]-alpha-D-glucosamine + acetate. It participates in glycolipid biosynthesis; lipid IV(A) biosynthesis; lipid IV(A) from (3R)-3-hydroxytetradecanoyl-[acyl-carrier-protein] and UDP-N-acetyl-alpha-D-glucosamine: step 2/6. Functionally, catalyzes the hydrolysis of UDP-3-O-myristoyl-N-acetylglucosamine to form UDP-3-O-myristoylglucosamine and acetate, the committed step in lipid A biosynthesis. This Acinetobacter baumannii (strain ATCC 17978 / DSM 105126 / CIP 53.77 / LMG 1025 / NCDC KC755 / 5377) protein is UDP-3-O-acyl-N-acetylglucosamine deacetylase.